The following is a 132-amino-acid chain: uncharacterized protein (132 aa).

This is an uncharacterized protein from Sinorhizobium fredii (strain NBRC 101917 / NGR234).